The primary structure comprises 31 residues: Cytochrome b6-f complex subunit 6 (31 aa).

The chain crosses the membrane as a helical span at residues 4–24 (IISYFLFLIGALTLALVLFIG).

This sequence belongs to the PetL family. As to quaternary structure, the 4 large subunits of the cytochrome b6-f complex are cytochrome b6, subunit IV (17 kDa polypeptide, PetD), cytochrome f and the Rieske protein, while the 4 small subunits are PetG, PetL, PetM and PetN. The complex functions as a dimer.

The protein localises to the plastid. The protein resides in the chloroplast thylakoid membrane. Its function is as follows. Component of the cytochrome b6-f complex, which mediates electron transfer between photosystem II (PSII) and photosystem I (PSI), cyclic electron flow around PSI, and state transitions. PetL is important for photoautotrophic growth as well as for electron transfer efficiency and stability of the cytochrome b6-f complex. The protein is Cytochrome b6-f complex subunit 6 of Marchantia polymorpha (Common liverwort).